Reading from the N-terminus, the 260-residue chain is Adenosylcobinamide-GDP ribazoletransferase (260 aa).

Helical transmembrane passes span 7 to 27 (WYFL…TRLP), 45 to 65 (LMGL…HWLG), 117 to 137 (AYGV…LASF), 145 to 165 (WALI…IALY), 187 to 207 (LLLG…ALAI), and 210 to 230 (WLIL…GRWF).

Belongs to the CobS family. The cofactor is Mg(2+).

It is found in the cell inner membrane. It carries out the reaction alpha-ribazole + adenosylcob(III)inamide-GDP = adenosylcob(III)alamin + GMP + H(+). The enzyme catalyses alpha-ribazole 5'-phosphate + adenosylcob(III)inamide-GDP = adenosylcob(III)alamin 5'-phosphate + GMP + H(+). Its pathway is cofactor biosynthesis; adenosylcobalamin biosynthesis; adenosylcobalamin from cob(II)yrinate a,c-diamide: step 7/7. Joins adenosylcobinamide-GDP and alpha-ribazole to generate adenosylcobalamin (Ado-cobalamin). Also synthesizes adenosylcobalamin 5'-phosphate from adenosylcobinamide-GDP and alpha-ribazole 5'-phosphate. This is Adenosylcobinamide-GDP ribazoletransferase from Synechocystis sp. (strain ATCC 27184 / PCC 6803 / Kazusa).